We begin with the raw amino-acid sequence, 446 residues long: tRNA modification GTPase MnmE (446 aa).

Residues R24, E81, and K120 each contribute to the (6S)-5-formyl-5,6,7,8-tetrahydrofolate site. One can recognise a TrmE-type G domain in the interval G216 to L368. Residue N226 coordinates K(+). Residues N226–S231, T245–T251, and D270–G273 each bind GTP. S230 contacts Mg(2+). 3 residues coordinate K(+): T245, V247, and T250. Residue T251 participates in Mg(2+) binding. K446 contacts (6S)-5-formyl-5,6,7,8-tetrahydrofolate.

It belongs to the TRAFAC class TrmE-Era-EngA-EngB-Septin-like GTPase superfamily. TrmE GTPase family. Homodimer. Heterotetramer of two MnmE and two MnmG subunits. K(+) serves as cofactor.

It localises to the cytoplasm. Functionally, exhibits a very high intrinsic GTPase hydrolysis rate. Involved in the addition of a carboxymethylaminomethyl (cmnm) group at the wobble position (U34) of certain tRNAs, forming tRNA-cmnm(5)s(2)U34. In Xanthomonas oryzae pv. oryzae (strain PXO99A), this protein is tRNA modification GTPase MnmE.